Consider the following 363-residue polypeptide: 3-isopropylmalate dehydrogenase (363 aa).

78–91 (GPKWEHLPPAEQPE) lines the NAD(+) pocket. Substrate is bound by residues R99, R109, R138, and D227. 3 residues coordinate Mg(2+): D227, D251, and D255. 285 to 297 (GSAPDIAGKDIAN) contributes to the NAD(+) binding site.

The protein belongs to the isocitrate and isopropylmalate dehydrogenases family. LeuB type 1 subfamily. Homodimer. The cofactor is Mg(2+). Mn(2+) serves as cofactor.

The protein resides in the cytoplasm. The catalysed reaction is (2R,3S)-3-isopropylmalate + NAD(+) = 4-methyl-2-oxopentanoate + CO2 + NADH. It participates in amino-acid biosynthesis; L-leucine biosynthesis; L-leucine from 3-methyl-2-oxobutanoate: step 3/4. In terms of biological role, catalyzes the oxidation of 3-carboxy-2-hydroxy-4-methylpentanoate (3-isopropylmalate) to 3-carboxy-4-methyl-2-oxopentanoate. The product decarboxylates to 4-methyl-2 oxopentanoate. The chain is 3-isopropylmalate dehydrogenase from Pectobacterium atrosepticum (strain SCRI 1043 / ATCC BAA-672) (Erwinia carotovora subsp. atroseptica).